A 313-amino-acid polypeptide reads, in one-letter code: N-acetyl-gamma-glutamyl-phosphate reductase 2 (313 aa).

Cysteine 117 is a catalytic residue.

The protein belongs to the NAGSA dehydrogenase family. Type 2 subfamily.

The protein localises to the cytoplasm. The catalysed reaction is N-acetyl-L-glutamate 5-semialdehyde + phosphate + NADP(+) = N-acetyl-L-glutamyl 5-phosphate + NADPH + H(+). The protein operates within amino-acid biosynthesis; L-arginine biosynthesis; N(2)-acetyl-L-ornithine from L-glutamate: step 3/4. Functionally, catalyzes the NADPH-dependent reduction of N-acetyl-5-glutamyl phosphate to yield N-acetyl-L-glutamate 5-semialdehyde. In Pseudomonas putida (strain ATCC 47054 / DSM 6125 / CFBP 8728 / NCIMB 11950 / KT2440), this protein is N-acetyl-gamma-glutamyl-phosphate reductase 2.